Consider the following 436-residue polypeptide: Protein TolB homolog (436 aa).

Positions 1–27 are cleaved as a signal peptide; sequence MRHSIRLTAALLLAFIACFSFPLSAMA.

The protein belongs to the TolB family.

It is found in the periplasm. This chain is Protein TolB homolog, found in Chlorobium luteolum (strain DSM 273 / BCRC 81028 / 2530) (Pelodictyon luteolum).